Consider the following 629-residue polypeptide: tRNA uridine 5-carboxymethylaminomethyl modification enzyme MnmG (629 aa).

13-18 (GGGHAG) is a binding site for FAD. 273–287 (GPRYCPSIEDKVVRF) contributes to the NAD(+) binding site.

Belongs to the MnmG family. Homodimer. Heterotetramer of two MnmE and two MnmG subunits. It depends on FAD as a cofactor.

Its subcellular location is the cytoplasm. Its function is as follows. NAD-binding protein involved in the addition of a carboxymethylaminomethyl (cmnm) group at the wobble position (U34) of certain tRNAs, forming tRNA-cmnm(5)s(2)U34. The polypeptide is tRNA uridine 5-carboxymethylaminomethyl modification enzyme MnmG (Nitrosococcus oceani (strain ATCC 19707 / BCRC 17464 / JCM 30415 / NCIMB 11848 / C-107)).